A 245-amino-acid chain; its full sequence is Carboxymethylenebutenolidase homolog (245 aa).

Ala2 is subject to N-acetylalanine. At Lys36 the chain carries N6-acetyllysine. Active-site residues include Cys132, Asp179, and His212. Ser223 is modified (phosphoserine).

It belongs to the dienelactone hydrolase family. As to expression, widely expressed, with highest levels in liver, followed by kidney, small intestine and colon. Present in liver and intestine (at protein level).

Its subcellular location is the cytoplasm. It localises to the cytosol. Strongly inhibited by p-chloromercuribenzoate (PCMB). Partially inhibited by bis-p-nitrophenylphosphate (BNPP). Not inhibited by DFP, PMSF, eserine or EDTA. Functionally, cysteine hydrolase. Can convert the prodrug olmesartan medoxomil into its pharmacologically active metabolite olmerstatan, an angiotensin receptor blocker, in liver and intestine. May also activate beta-lactam antibiotics faropenem medoxomil and lenampicillin. The polypeptide is Carboxymethylenebutenolidase homolog (CMBL) (Homo sapiens (Human)).